The chain runs to 497 residues: Di-/tripeptide transporter (497 aa).

Over 1-36 the chain is Cytoplasmic; the sequence is MQNLNKTEKTFFGQPRGLLTLFQTEFWERFSYYGMR. Residues 37–55 form a helical membrane-spanning segment; the sequence is AILVYYLYALTTADNAGLG. Residues 56 to 64 lie on the Extracellular side of the membrane; that stretch reads LPKAQAMAI. A helical transmembrane segment spans residues 65–83; sequence VSIYGALVYLSTIVGGWVA. Over 84–92 the chain is Cytoplasmic; sequence DRLLGASRT. The chain crosses the membrane as a helical span at residues 93–111; the sequence is IFLGGILITLGHVALATPF. Residues 112–115 are Extracellular-facing; that stretch reads GLSS. Residues 116 to 134 form a helical membrane-spanning segment; sequence LFVALFLIILGTGMLKPNI. The Cytoplasmic portion of the chain corresponds to 135-154; it reads SNMVGHLYSKDDSRRDTGFN. Residues 155-173 form a helical membrane-spanning segment; the sequence is IFVVGINMGSLIAPLIVGT. The Extracellular portion of the chain corresponds to 174-181; the sequence is VGQGVNYH. Residues 182 to 200 form a helical membrane-spanning segment; it reads LGFSLAAIGMIFALFAYWY. At 201-224 the chain is on the cytoplasmic side; the sequence is GRLRHFPEIGREPSNPMDAKAKRN. Residues 225 to 243 traverse the membrane as a helical segment; it reads FIITLTIVLIVALIGFFLI. Residues 244–254 lie on the Extracellular side of the membrane; it reads YQASPANFINN. The helical transmembrane segment at 255–273 threads the bilayer; the sequence is FINVLSIIGIVVPIIYFVM. The Cytoplasmic portion of the chain corresponds to 274–293; it reads MFTSKKVESDERRKLTAYIP. A helical transmembrane segment spans residues 294-312; it reads LFLSAIVFWAIEEQSSTII. The Extracellular segment spans residues 313–335; sequence AVWGESRSNLNPTWFGFTFHIDP. A helical membrane pass occupies residues 336–354; the sequence is SWYQLLNPLFIVLLSPIFV. The Cytoplasmic portion of the chain corresponds to 355-372; it reads RIWNKLGDRQPSTIVKFG. The chain crosses the membrane as a helical span at residues 373 to 391; the sequence is LGLMLTGASYLIMTLPGLL. At 392–425 the chain is on the extracellular side; sequence NGTSGRASALWLVLMFAVQMAGELLVSPVGLSVS. Residues 426–444 form a helical membrane-spanning segment; sequence TKLAPVAFQSQMMAMWFLA. Residues 445–497 are Cytoplasmic-facing; sequence DSTSQAINAQITPIFKAATEVHFFAITGIIGIIVGIILLIIKKPILKLMGDVR.

This sequence belongs to the major facilitator superfamily. Proton-dependent oligopeptide transporter (POT/PTR) (TC 2.A.17) family.

It localises to the cell membrane. Its function is as follows. Proton-dependent uptake of di- or tri-peptides. The sequence is that of Di-/tripeptide transporter (dtpT) from Lactococcus lactis subsp. cremoris (Streptococcus cremoris).